Here is a 353-residue protein sequence, read N- to C-terminus: tRNA-cytidine(32) 2-sulfurtransferase (353 aa).

The PP-loop motif motif lies at 49 to 54 (SGGKDS). [4Fe-4S] cluster contacts are provided by C124, C127, and C215.

It belongs to the TtcA family. In terms of assembly, homodimer. Mg(2+) serves as cofactor. Requires [4Fe-4S] cluster as cofactor.

It localises to the cytoplasm. It catalyses the reaction cytidine(32) in tRNA + S-sulfanyl-L-cysteinyl-[cysteine desulfurase] + AH2 + ATP = 2-thiocytidine(32) in tRNA + L-cysteinyl-[cysteine desulfurase] + A + AMP + diphosphate + H(+). Its pathway is tRNA modification. Catalyzes the ATP-dependent 2-thiolation of cytidine in position 32 of tRNA, to form 2-thiocytidine (s(2)C32). The sulfur atoms are provided by the cysteine/cysteine desulfurase (IscS) system. This is tRNA-cytidine(32) 2-sulfurtransferase from Sodalis glossinidius (strain morsitans).